The sequence spans 300 residues: Rhodopsin (300 aa).

At 1–18 the chain is on the extracellular side; it reads LHMIHLHWYQYPPMNPMM. A helical transmembrane segment spans residues 19 to 43; it reads YPLLLVFMLITGILCLAGNFVTIWV. Topologically, residues 44-55 are cytoplasmic; that stretch reads FMNTKSLRTPAN. A helical transmembrane segment spans residues 56 to 78; sequence LLVVNLAMSDFLMMFTMFPPMMV. Topologically, residues 79 to 92 are extracellular; the sequence is TCYYHTWTLGATFC. Cysteine 92 and cysteine 168 form a disulfide bridge. A helical transmembrane segment spans residues 93-115; sequence QVYAFLGNLCGCASIWTMVFITF. A 'Ionic lock' involved in activated form stabilization motif is present at residues 116–118; that stretch reads DRY. Residues 116 to 134 are Cytoplasmic-facing; sequence DRYNVIVKGVAGEPLSTKK. A helical membrane pass occupies residues 135–155; that stretch reads ASLWILTIWILSITWCIAPFF. Topologically, residues 156 to 181 are extracellular; the sequence is GWNRYVPEGNTGCGTDYLSEDILSRS. The helical transmembrane segment at 182-203 threads the bilayer; that stretch reads YLYIYSTWVYFLPLAITIYCHV. Topologically, residues 204 to 244 are cytoplasmic; that stretch reads FIIKAVAAHEKGMRDQAKKMGIKSLRNEEAQKTSAECRLAK. The helical transmembrane segment at 245–266 threads the bilayer; it reads IAMTTVALWFIAWTPYLLINWV. Residues 267 to 277 are Extracellular-facing; that stretch reads GMFARSYLSPV. Residues 278–299 traverse the membrane as a helical segment; sequence YTIWGYVFAKANAVYNPIVYAI. Lysine 287 carries the post-translational modification N6-(retinylidene)lysine.

Belongs to the G-protein coupled receptor 1 family. Opsin subfamily. In terms of assembly, homodimer. Interacts with GNAQ. In terms of processing, contains one covalently linked retinal chromophore.

It is found in the cell projection. The protein resides in the rhabdomere membrane. In terms of biological role, photoreceptor required for image-forming vision at low light intensity. Can use both retinal and 3-dehydroretinal as visual pigment. Light-induced isomerization of 11-cis to all-trans retinal triggers a conformational change that activates signaling via G-proteins. Signaling via GNAQ probably mediates the activation of phospholipase C. The chain is Rhodopsin (RHO) from Cambarus maculatus (Freckled crayfish).